Reading from the N-terminus, the 146-residue chain is Chorion class A protein Ld3/Ld29 (146 aa).

An N-terminal signal peptide occupies residues 1 to 21; sequence MNTFALLSVFIQACLVQSVFS.

This sequence belongs to the chorion protein family.

Functionally, this protein is one of many from the eggshell of the gypsy moth. The protein is Chorion class A protein Ld3/Ld29 of Lymantria dispar (Gypsy moth).